The chain runs to 167 residues: Small ribosomal subunit protein uS9 (167 aa).

The disordered stretch occupies residues 1 to 41 (MNTEAVAPDVAEEEVLTSYTSESSASADDAPKKERPALTVS). Positions 17 to 26 (TSYTSESSAS) are enriched in polar residues.

Belongs to the universal ribosomal protein uS9 family.

The chain is Small ribosomal subunit protein uS9 from Renibacterium salmoninarum (strain ATCC 33209 / DSM 20767 / JCM 11484 / NBRC 15589 / NCIMB 2235).